The chain runs to 341 residues: MDWQRLIVSYLVGFVLLNVLLGLMAYMTWFERRVLARMQHRVGPNRTGPFGLLQPIADGIKLLAKEDIVPANADRLVFLVAPLLSFALAPLGAAVIPFGDTLQLFGIEIPLLVADINVAVLYVLALGSVGVYGIILGGYASGNRYSLLGALRSTAQVISYELVLGLSLVGVFILSGSLSLQDILREQQRMLVLGPLTLPNWYILSQPLAFALFLIAAVAETNRAPFDLPEAETELVAGYFTEYSGFRFSFYFLAEYINMIVVSLLAATLFLGGIDGPFADGVWWLALKALFFLFFYVWLRATLPRFRYDQLMGLAWKVLLPLALLNIGLTGLVRLWGIGAL.

8 consecutive transmembrane segments (helical) span residues 6 to 26 (LIVS…LMAY), 76 to 96 (LVFL…AAVI), 118 to 138 (VAVL…ILGG), 157 to 177 (VISY…LSGS), 198 to 218 (LPNW…IAAV), 252 to 272 (FLAE…LFLG), 278 to 298 (FADG…FYVW), and 313 to 333 (GLAW…TGLV).

It belongs to the complex I subunit 1 family. In terms of assembly, NDH-1 is composed of 14 different subunits. Subunits NuoA, H, J, K, L, M, N constitute the membrane sector of the complex.

It localises to the cell membrane. It catalyses the reaction a quinone + NADH + 5 H(+)(in) = a quinol + NAD(+) + 4 H(+)(out). NDH-1 shuttles electrons from NADH, via FMN and iron-sulfur (Fe-S) centers, to quinones in the respiratory chain. The immediate electron acceptor for the enzyme in this species is believed to be ubiquinone. Couples the redox reaction to proton translocation (for every two electrons transferred, four hydrogen ions are translocated across the cytoplasmic membrane), and thus conserves the redox energy in a proton gradient. This subunit may bind ubiquinone. This is NADH-quinone oxidoreductase subunit H from Thermomicrobium roseum (strain ATCC 27502 / DSM 5159 / P-2).